A 299-amino-acid polypeptide reads, in one-letter code: Mitochondrial 2-oxodicarboxylate carrier (299 aa).

3 Solcar repeats span residues 11-100 (REAS…YKKL), 107-196 (SPAL…VKNM), and 205-294 (LEFW…TYSW). 6 helical membrane-spanning segments follow: residues 17–37 (IVAGGSAGLVEICLMHPLDVV), 70–89 (FGFYKGILPPILAETPKRAV), 113–133 (AIAGLGSGLTEAIVVNPFEVV), 167–187 (GLNKGLTATLGRHGVFNMVYF), 205–225 (LEFWRKFGIGLLSGTIASVIN), and 277–297 (LGPGGAVMLLVYEYTYSWLQE).

Belongs to the mitochondrial carrier (TC 2.A.29) family. In terms of tissue distribution, expressed in placenta, gall bladder and colon.

The protein localises to the mitochondrion inner membrane. It catalyses the reaction 2-oxoadipate(in) + 2-oxoglutarate(out) = 2-oxoadipate(out) + 2-oxoglutarate(in). The enzyme catalyses hexanedioate(in) + 2-oxoglutarate(out) = hexanedioate(out) + 2-oxoglutarate(in). It carries out the reaction L-2-aminoadipate(in) + 2-oxoglutarate(out) = L-2-aminoadipate(out) + 2-oxoglutarate(in). The catalysed reaction is glutarate(in) + 2-oxoglutarate(out) = glutarate(out) + 2-oxoglutarate(in). It catalyses the reaction 2-oxoheptanedioate(in) + 2-oxoglutarate(out) = 2-oxoheptanedioate(out) + 2-oxoglutarate(in). The enzyme catalyses heptanedioate(in) + 2-oxoglutarate(out) = heptanedioate(out) + 2-oxoglutarate(in). It carries out the reaction citrate(in) + 2-oxoglutarate(out) = citrate(out) + 2-oxoglutarate(in). Transports dicarboxylates across the inner membranes of mitochondria by a counter-exchange mechanism. Can transport 2-oxoadipate (2-oxohexanedioate), 2-oxoglutarate, adipate (hexanedioate), glutarate, and to a lesser extent, pimelate (heptanedioate), 2-oxopimelate (2-oxoheptanedioate), 2-aminoadipate (2-aminohexanedioate), oxaloacetate, and citrate. Plays a central role in catabolism of lysine, hydroxylysine, and tryptophan, by transporting common metabolite intermediates (such as 2-oxoadipate) into the mitochondria, where it is converted into acetyl-CoA and can enter the citric acid (TCA) cycle. The chain is Mitochondrial 2-oxodicarboxylate carrier (SLC25A21) from Homo sapiens (Human).